The following is a 1145-amino-acid chain: DNA polymerase subunit gamma-1, mitochondrial (1145 aa).

A mitochondrion-targeting transit peptide spans Met-1 to Tyr-9.

Belongs to the DNA polymerase type-A family. In terms of assembly, component of the DNA polymerase gamma complex consisting of two subunits: the catalytic subunit DNApol-gamma/DNApolG1 and the accessory subunit PolG2/DNApol-gamma35. Mg(2+) serves as cofactor.

It is found in the mitochondrion. It carries out the reaction DNA(n) + a 2'-deoxyribonucleoside 5'-triphosphate = DNA(n+1) + diphosphate. With respect to regulation, stimulated by KCl, and inhibited by the small molecules o 2',3'-dideoxythymidine 5'-triphosphate (d2TTP) and N-ethylmaleimide (NEM). As the catalytic component of the DNA polymerase gamma complex is involved in the replication of mitochondrial DNA (mtDNA). Has both 5'-3' DNA polymerase and a highly mispair-specific 3'-5' exonuclease activity. At the end of mtDNA replication DNA ends are ligated to produce a closed circular mtDNA molecule, its exonuclease activity is required for formation of these ligatable ends by preventing DNA synthesis from continuing past the 5'-end of downstream DNA into duplex DNA regions. Does not possess DNA primase activity, does not catalyze strand displacement synthesis and does not contain a 5'-3' exonuclease activity to catalyze nick translation. Important for promoting the elimination of paternal mitochondrial DNA during spermatogenesis, however its exact role in this function has not yet been identified and appears to be independent of its 3'-5'-exonuclease activity and only partially dependent on its DNA polymerase activity. The sequence is that of DNA polymerase subunit gamma-1, mitochondrial from Drosophila melanogaster (Fruit fly).